The chain runs to 454 residues: Light-independent protochlorophyllide reductase subunit N (454 aa).

Residues Cys-22, Cys-47, and Cys-107 each contribute to the [4Fe-4S] cluster site.

It belongs to the BchN/ChlN family. Protochlorophyllide reductase is composed of three subunits; ChlL, ChlN and ChlB. Forms a heterotetramer of two ChlB and two ChlN subunits. It depends on [4Fe-4S] cluster as a cofactor.

It localises to the plastid. The protein resides in the chloroplast. It carries out the reaction chlorophyllide a + oxidized 2[4Fe-4S]-[ferredoxin] + 2 ADP + 2 phosphate = protochlorophyllide a + reduced 2[4Fe-4S]-[ferredoxin] + 2 ATP + 2 H2O. The protein operates within porphyrin-containing compound metabolism; chlorophyll biosynthesis (light-independent). Its function is as follows. Component of the dark-operative protochlorophyllide reductase (DPOR) that uses Mg-ATP and reduced ferredoxin to reduce ring D of protochlorophyllide (Pchlide) to form chlorophyllide a (Chlide). This reaction is light-independent. The NB-protein (ChlN-ChlB) is the catalytic component of the complex. This chain is Light-independent protochlorophyllide reductase subunit N, found in Cycas taitungensis (Prince sago).